A 337-amino-acid polypeptide reads, in one-letter code: Biotin synthase (337 aa).

In terms of domain architecture, Radical SAM core spans 58 to 283 (EDVEVEGIVS…RTVLRYAGGR (226 aa)). Positions 73, 77, and 80 each coordinate [4Fe-4S] cluster. Residues C116, C149, C208, and R278 each coordinate [2Fe-2S] cluster.

The protein belongs to the radical SAM superfamily. Biotin synthase family. In terms of assembly, homodimer. [4Fe-4S] cluster is required as a cofactor. It depends on [2Fe-2S] cluster as a cofactor.

It carries out the reaction (4R,5S)-dethiobiotin + (sulfur carrier)-SH + 2 reduced [2Fe-2S]-[ferredoxin] + 2 S-adenosyl-L-methionine = (sulfur carrier)-H + biotin + 2 5'-deoxyadenosine + 2 L-methionine + 2 oxidized [2Fe-2S]-[ferredoxin]. The protein operates within cofactor biosynthesis; biotin biosynthesis; biotin from 7,8-diaminononanoate: step 2/2. Functionally, catalyzes the conversion of dethiobiotin (DTB) to biotin by the insertion of a sulfur atom into dethiobiotin via a radical-based mechanism. In Pseudarthrobacter chlorophenolicus (strain ATCC 700700 / DSM 12829 / CIP 107037 / JCM 12360 / KCTC 9906 / NCIMB 13794 / A6) (Arthrobacter chlorophenolicus), this protein is Biotin synthase.